The following is a 268-amino-acid chain: Small ribosomal subunit protein uS2 (268 aa).

The segment at 161–179 (IPCNNDKYSIALMLWMLAR) is laminin-binding.

It belongs to the universal ribosomal protein uS2 family. Component of the small ribosomal subunit. Mature ribosomes consist of a small (40S) and a large (60S) subunit. The 40S subunit contains about 33 different proteins and 1 molecule of RNA (18S). The 60S subunit contains about 49 different proteins and 3 molecules of RNA (28S, 5.8S and 5S). Interacts with ribosomal protein S21.

The protein localises to the cytoplasm. Required for the assembly and/or stability of the 40S ribosomal subunit. Required for the processing of the 20S rRNA-precursor to mature 18S rRNA in a late step of the maturation of 40S ribosomal subunits. Binds laminin. In Echinococcus granulosus (Hydatid tapeworm), this protein is Small ribosomal subunit protein uS2 (egmo3).